The chain runs to 262 residues: Shikimate dehydrogenase (NADP(+)) (262 aa).

Residues 15-17 (SRS) and Thr62 contribute to the shikimate site. The Proton acceptor role is filled by Lys66. Glu78 contributes to the NADP(+) binding site. Residues Asn87 and Asp102 each coordinate shikimate. NADP(+)-binding positions include 126–130 (GAGGA), 150–155 (NRTLAR), and Met214. Tyr216 serves as a coordination point for shikimate. Position 236 (Gly236) interacts with NADP(+).

It belongs to the shikimate dehydrogenase family. Homodimer.

It carries out the reaction shikimate + NADP(+) = 3-dehydroshikimate + NADPH + H(+). It participates in metabolic intermediate biosynthesis; chorismate biosynthesis; chorismate from D-erythrose 4-phosphate and phosphoenolpyruvate: step 4/7. Involved in the biosynthesis of the chorismate, which leads to the biosynthesis of aromatic amino acids. Catalyzes the reversible NADPH linked reduction of 3-dehydroshikimate (DHSA) to yield shikimate (SA). The protein is Shikimate dehydrogenase (NADP(+)) of Acinetobacter baumannii (strain ATCC 17978 / DSM 105126 / CIP 53.77 / LMG 1025 / NCDC KC755 / 5377).